Here is a 303-residue protein sequence, read N- to C-terminus: D-alanine--D-alanine ligase (303 aa).

In terms of domain architecture, ATP-grasp spans 104–300 (KLLWNAVGLP…FEKLVERVLE (197 aa)). 132 to 187 (IAKLSLPVFVKPSSEGSSVGVFKVKTKEELLPAITAALEFDTIVLVEEFLTGAEYS) is an ATP binding site. Residues aspartate 254, glutamate 267, and asparagine 269 each contribute to the Mg(2+) site.

Belongs to the D-alanine--D-alanine ligase family. Mg(2+) is required as a cofactor. Mn(2+) serves as cofactor.

The protein localises to the cytoplasm. The enzyme catalyses 2 D-alanine + ATP = D-alanyl-D-alanine + ADP + phosphate + H(+). The protein operates within cell wall biogenesis; peptidoglycan biosynthesis. In terms of biological role, cell wall formation. The protein is D-alanine--D-alanine ligase of Haemophilus ducreyi (strain 35000HP / ATCC 700724).